A 332-amino-acid chain; its full sequence is 2-hydroxyacid dehydrogenase homolog 2 (332 aa).

NAD(+)-binding positions include 154–155 (KI), 233–235 (TSR), and aspartate 259. Arginine 235 is a catalytic residue. Residue glutamate 264 is part of the active site. The active-site Proton donor is the histidine 296. 296 to 299 (HQAF) serves as a coordination point for NAD(+).

It belongs to the D-isomer specific 2-hydroxyacid dehydrogenase family.

It localises to the cytoplasm. It is found in the nucleus. This Schizosaccharomyces pombe (strain 972 / ATCC 24843) (Fission yeast) protein is 2-hydroxyacid dehydrogenase homolog 2.